Reading from the N-terminus, the 140-residue chain is Putative pre-16S rRNA nuclease (140 aa).

This sequence belongs to the YqgF nuclease family.

Its subcellular location is the cytoplasm. In terms of biological role, could be a nuclease involved in processing of the 5'-end of pre-16S rRNA. The polypeptide is Putative pre-16S rRNA nuclease (Mycoplasma pneumoniae (strain ATCC 29342 / M129 / Subtype 1) (Mycoplasmoides pneumoniae)).